A 95-amino-acid polypeptide reads, in one-letter code: Costars family protein WS02710_H03 (95 aa).

The protein belongs to the costars family.

The protein is Costars family protein WS02710_H03 of Picea sitchensis (Sitka spruce).